The following is a 962-amino-acid chain: Putative RNA Helicase B962L (962 aa).

The 187-residue stretch at 43–229 (IPTSLADRVL…FGIGKENIIL (187 aa)) folds into the Helicase ATP-binding domain. An ATP-binding site is contributed by 56 to 63 (SRTGSGKS). The DEAH box motif lies at 167–170 (DEAH). Positions 253-459 (ACETALTIHK…TIKKNKEGVF (207 aa)) constitute a Helicase C-terminal domain. The helical transmembrane segment at 521-541 (GYFWQAAISDIATILAVVSVA) threads the bilayer.

The protein belongs to the DEAD box helicase family. DEAH subfamily.

It localises to the host membrane. The protein localises to the virion. It carries out the reaction ATP + H2O = ADP + phosphate + H(+). The protein is Putative RNA Helicase B962L of African swine fever virus (isolate Tick/South Africa/Pretoriuskop Pr4/1996) (ASFV).